The chain runs to 152 residues: Small ribosomal subunit protein uS15 (152 aa).

It belongs to the universal ribosomal protein uS15 family. As to quaternary structure, part of the 30S ribosomal subunit.

The polypeptide is Small ribosomal subunit protein uS15 (Saccharolobus solfataricus (strain ATCC 35092 / DSM 1617 / JCM 11322 / P2) (Sulfolobus solfataricus)).